Here is a 408-residue protein sequence, read N- to C-terminus: Putative mannan endo-1,4-beta-mannosidase P (408 aa).

Residues 1–23 form the signal peptide; sequence MKCLCFIVLLAIVIAQSYVGVEA. N73 is a glycosylation site (N-linked (GlcNAc...) asparagine). Substrate contacts are provided by W85 and N201. The active-site Proton donor is the E202. The active-site Nucleophile is the E322. Residue W364 participates in substrate binding.

Belongs to the glycosyl hydrolase 5 (cellulase A) family.

Its subcellular location is the secreted. It carries out the reaction Random hydrolysis of (1-&gt;4)-beta-D-mannosidic linkages in mannans, galactomannans and glucomannans.. In Arabidopsis thaliana (Mouse-ear cress), this protein is Putative mannan endo-1,4-beta-mannosidase P (MANP).